Consider the following 145-residue polypeptide: D-aminoacyl-tRNA deacylase (145 aa).

The Gly-cisPro motif, important for rejection of L-amino acids signature appears at 137-138; that stretch reads GP.

It belongs to the DTD family. In terms of assembly, homodimer.

The protein localises to the cytoplasm. The enzyme catalyses glycyl-tRNA(Ala) + H2O = tRNA(Ala) + glycine + H(+). The catalysed reaction is a D-aminoacyl-tRNA + H2O = a tRNA + a D-alpha-amino acid + H(+). In terms of biological role, an aminoacyl-tRNA editing enzyme that deacylates mischarged D-aminoacyl-tRNAs. Also deacylates mischarged glycyl-tRNA(Ala), protecting cells against glycine mischarging by AlaRS. Acts via tRNA-based rather than protein-based catalysis; rejects L-amino acids rather than detecting D-amino acids in the active site. By recycling D-aminoacyl-tRNA to D-amino acids and free tRNA molecules, this enzyme counteracts the toxicity associated with the formation of D-aminoacyl-tRNA entities in vivo and helps enforce protein L-homochirality. The sequence is that of D-aminoacyl-tRNA deacylase from Salmonella paratyphi A (strain AKU_12601).